The sequence spans 445 residues: MEFKLEEHFNKTFVTENNTAAARNAAFPAWEDYRGSVDDLQYFLIGLYTFVSLLGFMGNLLILMAVMKKRNQKTTVNFLIGNLAFSDILVVLFCSPFTLTSVLLDQWMFGKAMCHIMPFLQCVSVLVSTLILISIAIVRYHMIKHPISNNLTANHGYFLIATVWTLGFAICSPLPVFHSLVELKETFGSALLSSKYLCVESWPSDSYRIAFTISLLLVQYILPLVCLTVSHTSVCRSISCGLSHKENRLEENEMINLTLQPSKKSRNQAKTPSTQKWSYSFIRKHRRRYSKKTACVLPAPAGPSQGKHLAVPENPASVRSQLSPSSKVIPGVPICFEVKPEESSDAHEMRVKRSITRIKKRSRSVFYRLTILILVFAVSWMPLHVFHVVTDFNDNLISNRHFKLVYCICHLLGMMSCCLNPILYGFLNNGIKADLRALIHCLHMS.

At 1–42 (MEFKLEEHFNKTFVTENNTAAARNAAFPAWEDYRGSVDDLQY) the chain is on the extracellular side. Asparagine 10 and asparagine 17 each carry an N-linked (GlcNAc...) asparagine glycan. Residues 43–63 (FLIGLYTFVSLLGFMGNLLIL) form a helical membrane-spanning segment. Topologically, residues 64 to 77 (MAVMKKRNQKTTVN) are cytoplasmic. A helical transmembrane segment spans residues 78-98 (FLIGNLAFSDILVVLFCSPFT). At 99–117 (LTSVLLDQWMFGKAMCHIM) the chain is on the extracellular side. A disulfide bond links cysteine 114 and cysteine 198. The chain crosses the membrane as a helical span at residues 118 to 138 (PFLQCVSVLVSTLILISIAIV). The Cytoplasmic portion of the chain corresponds to 139–156 (RYHMIKHPISNNLTANHG). A helical transmembrane segment spans residues 157–177 (YFLIATVWTLGFAICSPLPVF). At 178–208 (HSLVELKETFGSALLSSKYLCVESWPSDSYR) the chain is on the extracellular side. Residues 209–229 (IAFTISLLLVQYILPLVCLTV) traverse the membrane as a helical segment. Residues 230 to 368 (SHTSVCRSIS…KKRSRSVFYR (139 aa)) lie on the Cytoplasmic side of the membrane. Residues 369-389 (LTILILVFAVSWMPLHVFHVV) traverse the membrane as a helical segment. Residues 390-406 (TDFNDNLISNRHFKLVY) are Extracellular-facing. Residues 407–427 (CICHLLGMMSCCLNPILYGFL) traverse the membrane as a helical segment. The Cytoplasmic segment spans residues 428 to 445 (NNGIKADLRALIHCLHMS). Cysteine 441 carries the S-palmitoyl cysteine lipid modification.

This sequence belongs to the G-protein coupled receptor 1 family. Brain; hypothalamus.

It localises to the cell membrane. Receptor for neuropeptide Y and peptide YY. The activity of this receptor is mediated by G proteins that inhibit adenylate cyclase activity. Seems to be associated with food intake. Could be involved in feeding disorders. The polypeptide is Neuropeptide Y receptor type 5 (Npy5r) (Rattus norvegicus (Rat)).